The following is a 332-amino-acid chain: Cysteine and histidine-rich domain-containing protein 1 (332 aa).

Position 2 is an N-acetylalanine (Ala2). An interaction with PPP5C region spans residues 2-77; it reads ALLCYNRGCG…KPPEPVKPEV (76 aa). Positions 5, 10, 24, 27, 42, and 43 each coordinate Zn(2+). CHORD domains are found at residues 5–64 and 157–216; these read CYNR…KGRH and CKNG…KGKH. The residue at position 47 (Thr47) is a Phosphothreonine. Ser51 is subject to Phosphoserine. Residues Cys59, His64, Cys157, Cys162, Cys176, His179, Cys194, Cys195, Cys211, and His216 each contribute to the Zn(2+) site. An interaction with HSP90AA1 and HSP90AB1 region spans residues 65 to 316; that stretch reads NSEKPPEPVK…AEPMQWASLE (252 aa). One can recognise a CS domain in the interval 227-316; it reads VVPCRHDWHQ…AEPMQWASLE (90 aa).

As to quaternary structure, interacts with HSP90AA1, ROCK1 and ROCK2. Interacts with HSP90AB1 and PPP5C. In terms of tissue distribution, underexpressed in many breast and lung cancers.

Its function is as follows. Regulates centrosome duplication, probably by inhibiting the kinase activity of ROCK2. Proposed to act as co-chaperone for HSP90. May play a role in the regulation of NOD1 via a HSP90 chaperone complex. In vitro, has intrinsic chaperone activity. This function may be achieved by inhibiting association of ROCK2 with NPM1. Plays a role in ensuring the localization of the tyrosine kinase receptor EGFR to the plasma membrane, and thus ensures the subsequent regulation of EGFR activity and EGF-induced actin cytoskeleton remodeling. Involved in stress response. Prevents tumorigenesis. This Homo sapiens (Human) protein is Cysteine and histidine-rich domain-containing protein 1 (CHORDC1).